The following is a 287-amino-acid chain: Glycine--tRNA ligase alpha subunit (287 aa).

The protein belongs to the class-II aminoacyl-tRNA synthetase family. As to quaternary structure, tetramer of two alpha and two beta subunits.

It is found in the cytoplasm. The catalysed reaction is tRNA(Gly) + glycine + ATP = glycyl-tRNA(Gly) + AMP + diphosphate. The polypeptide is Glycine--tRNA ligase alpha subunit (Campylobacter jejuni subsp. jejuni serotype O:23/36 (strain 81-176)).